We begin with the raw amino-acid sequence, 195 residues long: Probable chorismate pyruvate-lyase (195 aa).

Substrate-binding residues include R79, L117, and E180.

Belongs to the UbiC family.

It localises to the cytoplasm. The catalysed reaction is chorismate = 4-hydroxybenzoate + pyruvate. The protein operates within cofactor biosynthesis; ubiquinone biosynthesis. In terms of biological role, removes the pyruvyl group from chorismate, with concomitant aromatization of the ring, to provide 4-hydroxybenzoate (4HB) for the ubiquinone pathway. In Ralstonia nicotianae (strain ATCC BAA-1114 / GMI1000) (Ralstonia solanacearum), this protein is Probable chorismate pyruvate-lyase.